The following is a 284-amino-acid chain: MAVDIQYSYSSMAPSLRRERFTFKISPKLSKPLRPCIQLGSKDEASGMVAPAVQEKKVKKRVSFADNQGLALTMVKVFSEFDDPLDIPFNITELLDNIVSLTTAESESFVLDFPQPSADYLDFRNRLQTNHVCLENCVLKDKAIAGTVKVQNLAFEKVVKIRMTFDTWKSFTDFPCQYVKDTYAGSDRDTFSFDISLPEKIQSYERMEFAVCYECNGQAYWDSNKGKNYRITRAELRSSPGKIEPYNGPDFGISFDQFGSPRCSFGLFPEWPSYLGYEKLGPYY.

The short motif at 61–64 is the PP1-binding motif element; the sequence is RVSF. The 109-residue stretch at 124–232 folds into the CBM21 domain; sequence RNRLQTNHVC…SNKGKNYRIT (109 aa). The residue at position 260 (Ser-260) is a Phosphoserine.

As to quaternary structure, interacts with glycogen, PPP1CC catalytic subunit of PP1 and PYGL. Associates with glycogen particles. Forms complexes with debranching enzyme, glycogen phosphorylase, glycogen synthase and phosphorylase kinase which is necessary for its regulation of PP1 activity. In terms of tissue distribution, highly expressed in liver (at protein level). Expressed predominantly in liver. Expressed moderately in heart. Expressed weakly in prostate, stomach, thyroid, lung, kidney, spleen and skeletal muscle.

Its function is as follows. Acts as a glycogen-targeting subunit for phosphatase PP1. Facilitates interaction of the PP1 with enzymes of the glycogen metabolism and regulates its activity. Suppresses the rate at which PP1 dephosphorylates (inactivates) glycogen phosphorylase and enhances the rate at which it activates glycogen synthase and therefore limits glycogen breakdown. Its activity is inhibited by PYGL, resulting in inhibition of the glycogen synthase and glycogen phosphorylase phosphatase activities of PP1. Dramatically increases basal and insulin-stimulated glycogen synthesis upon overexpression in hepatocytes. This chain is Protein phosphatase 1 regulatory subunit 3B (Ppp1r3b), found in Mus musculus (Mouse).